Reading from the N-terminus, the 160-residue chain is UPF0479 membrane protein YLL066W-A (160 aa).

Helical transmembrane passes span isoleucine 39–glutamine 59 and valine 136–histidine 156.

It belongs to the UPF0479 family.

The protein resides in the membrane. This Saccharomyces cerevisiae (strain ATCC 204508 / S288c) (Baker's yeast) protein is UPF0479 membrane protein YLL066W-A.